The following is a 199-amino-acid chain: MACNIPNQRQRTMSTSGKALYEILGLHKGASNEEIKKTYRKLALKHHPDKNPDDPGAAEKFKEINNAHTILTDMSKRNIYDKYGSLGLYVAEQFGDENVNTYFMLSSWWAKTLFVIIGLLTGCYFCCCLCCCCNCCCGRCWTKSSMPEEDFYVSPEDLEEQIKTDIAKDMDFPVVLQPTNANEKTQLIREEPRSYCTDS.

Residues serine 14 and serine 16 each carry the phosphoserine modification. One can recognise a J domain in the interval 19–84 (ALYEILGLHK…SKRNIYDKYG (66 aa)).

Interacts with the chaperone complex consisting of HSC70 and SGTA. In terms of processing, palmitoylated.

It is found in the membrane. In Bos taurus (Bovine), this protein is DnaJ homolog subfamily C member 5B (DNAJC5B).